Consider the following 191-residue polypeptide: Calcium and integrin-binding protein 1 (191 aa).

Gly2 is lipidated: N-myristoyl glycine. 2 EF-hand domains span residues Thr103–Glu138 and Glu148–Phe183. Ca(2+) is bound by residues Asp116, Asp118, Asp120, Thr122, Asp127, Asp161, Asp163, Asp165, Thr167, and Glu172.

As to quaternary structure, monomer. Interacts with the heterodimeric integrin alpha-IIb/beta3 (ITGA2B-ITGB3). Interacts with ITGA2B (via cytoplasmic domain); the interaction is direct and calcium-dependent. Interacts with the protein kinases PLK2/SNK and PRKDC (via the region immediately upstream of the kinase domain). Interacts with PLK3; the interaction inhibits PLK3 kinase activity. Interacts with PSEN2. Interacts (via C-terminus) with F8. Interacts with NBR1 (via C-terminus). Interacts with FEZ1 (via C-terminus). Interacts with UBR5 (via C-terminus); the interaction is sensitive to DNA damage, and may target CIB1 for ubiquitin-mediated degradation. Interacts with IFI6; the interaction is direct. Interacts with BCL2. Interacts with ITPR3; the interaction occurs in a calcium dependent manner. Interacts with PTK2/FAK1. Interacts with MAP3K5; the interaction inhibits MAP3K5 activation by phosphorylation, and its subsequent interaction with TRAF2. Interacts (via C-terminal region) with STMN2 (via the N-terminal region); the interaction is direct, occurs in a calcium-dependent manner and attenuates the STMN2-induced neurite outgrowth inhibition. Interacts with SPHK1, the interaction occurs in a calcium-dependent manner. Interacts with ITGA2B (via C-terminal cytoplasmic tail); the interaction occurs upon platelet aggregation and is stabilized/increased in a calcium and magnesium-dependent manner. Interacts with PAK1 (via N-terminal region); the interaction is direct and occurs in a calcium-dependent manner. Interacts with RAC3 (via C-terminal region); the interaction induces their association with the cytoskeleton upon alpha-IIb/beta3 integrin-mediated adhesion. Interacts with ITGA5 and ITGAV. Interacts with MYO1C. Interacts with ITGA2B (via C-terminal cytoplasmic tail region). Interacts (via C-terminal region) with PPP3R1; the interaction increases upon cardiomyocytes hypertrophy. Interacts with CACNA1C; the interaction increases upon cardiomyocytes hypertrophy. Interacts with TAS1R2 (via C-terminus); this interaction is independent of the myristoylation state of CIB1. Interacts and forms a complex with TMC6 and TMC8; the interaction stabilizes each component of the complex.

The protein resides in the membrane. The protein localises to the cell membrane. It localises to the sarcolemma. It is found in the apical cell membrane. Its subcellular location is the cell projection. The protein resides in the ruffle membrane. The protein localises to the filopodium tip. It localises to the growth cone. It is found in the lamellipodium. Its subcellular location is the cytoplasm. The protein resides in the cytoskeleton. The protein localises to the microtubule organizing center. It localises to the centrosome. It is found in the perinuclear region. Its subcellular location is the nucleus. The protein resides in the neuron projection. The protein localises to the perikaryon. Functionally, calcium-binding protein that plays a role in the regulation of numerous cellular processes, such as cell differentiation, cell division, cell proliferation, cell migration, thrombosis, angiogenesis, cardiac hypertrophy and apoptosis. Involved in bone marrow megakaryocyte differentiation by negatively regulating thrombopoietin-mediated signaling pathway. Participates in the endomitotic cell cycle of megakaryocyte, a form of mitosis in which both karyokinesis and cytokinesis are interrupted. Plays a role in integrin signaling by negatively regulating alpha-IIb/beta3 activation in thrombin-stimulated megakaryocytes preventing platelet aggregation. Up-regulates PTK2/FAK1 activity, and is also needed for the recruitment of PTK2/FAK1 to focal adhesions; it thus appears to play an important role in focal adhesion formation. Positively regulates cell migration on fibronectin in a CDC42-dependent manner, the effect being negatively regulated by PAK1. Functions as a negative regulator of stress activated MAP kinase (MAPK) signaling pathways. Down-regulates inositol 1,4,5-trisphosphate receptor-dependent calcium signaling. Involved in sphingosine kinase SPHK1 translocation to the plasma membrane in a N-myristoylation-dependent manner preventing TNF-alpha-induced apoptosis. Regulates serine/threonine-protein kinase PLK3 activity for proper completion of cell division progression. Plays a role in microtubule (MT) dynamics during neuronal development; disrupts the MT depolymerization activity of STMN2 attenuating NGF-induced neurite outgrowth and the MT reorganization at the edge of lamellipodia. Promotes cardiomyocyte hypertrophy via activation of the calcineurin/NFAT signaling pathway. Stimulates calcineurin PPP3R1 activity by mediating its anchoring to the sarcolemma. In ischemia-induced (pathological or adaptive) angiogenesis, stimulates endothelial cell proliferation, migration and microvessel formation by activating the PAK1 and ERK1/ERK2 signaling pathway. Also promotes cancer cell survival and proliferation. May regulate cell cycle and differentiation of spermatogenic germ cells, and/or differentiation of supporting Sertoli cells. Forms a complex with TMC6/EVER1 and TMC8/EVER2 in lymphocytes and keratynocytes where CIB1 stabilizes TMC6 and TMC8 levels and reciprocally. The chain is Calcium and integrin-binding protein 1 (CIB1) from Bos taurus (Bovine).